The sequence spans 215 residues: Variable small protein 2 (215 aa).

The N-terminal stretch at 1–18 (MRKRISAIIMTLFMVFMS) is a signal peptide. Cysteine 19 is lipidated: N-palmitoyl cysteine. A lipid anchor (S-diacylglycerol cysteine) is attached at cysteine 19.

It belongs to the variable small protein (Vsp) family.

The protein resides in the cell outer membrane. In terms of biological role, the Vlp and Vsp proteins are antigenically distinct proteins, only one vlp or vsp gene is transcriptionally active at any one time. Switching between these genes is a mechanism of host immune response evasion. The polypeptide is Variable small protein 2 (Borrelia hermsii).